The chain runs to 243 residues: Adenosylcobinamide-GDP ribazoletransferase (243 aa).

Transmembrane regions (helical) follow at residues tryptophan 8–leucine 28, proline 36–leucine 56, valine 58–leucine 78, alanine 107–serine 127, lysine 131–alanine 151, phenylalanine 187–proline 207, and tyrosine 222–alanine 242.

The protein belongs to the CobS family. Mg(2+) is required as a cofactor.

It localises to the cell inner membrane. The enzyme catalyses alpha-ribazole + adenosylcob(III)inamide-GDP = adenosylcob(III)alamin + GMP + H(+). It carries out the reaction alpha-ribazole 5'-phosphate + adenosylcob(III)inamide-GDP = adenosylcob(III)alamin 5'-phosphate + GMP + H(+). Its pathway is cofactor biosynthesis; adenosylcobalamin biosynthesis; adenosylcobalamin from cob(II)yrinate a,c-diamide: step 7/7. In terms of biological role, joins adenosylcobinamide-GDP and alpha-ribazole to generate adenosylcobalamin (Ado-cobalamin). Also synthesizes adenosylcobalamin 5'-phosphate from adenosylcobinamide-GDP and alpha-ribazole 5'-phosphate. The protein is Adenosylcobinamide-GDP ribazoletransferase of Thermosynechococcus vestitus (strain NIES-2133 / IAM M-273 / BP-1).